Consider the following 162-residue polypeptide: Caveolin-2 (162 aa).

Residues 1–86 lie on the Cytoplasmic side of the membrane; sequence MGLETEKADV…FEMSKYVIYK (86 aa). Position 19 is a phosphotyrosine; by SRC (Tyr19). Phosphoserine occurs at positions 20 and 23. At Tyr27 the chain carries Phosphotyrosine; by SRC. An intramembrane region (helical) is located at residues 87 to 107; it reads FLTVFLAIPLAFAAGILFATL. The Cytoplasmic portion of the chain corresponds to 108 to 162; it reads SCLHIWIIMPFVKTCLMVLPSVQTIWKSVTDVVIAPLCTSIGRSFSSVSLQLSHD.

The protein belongs to the caveolin family. In terms of assembly, monomer or homodimer. Interacts with CAV1; the interaction forms a stable heterooligomeric complex that is required for targeting to lipid rafts and for caveolae formation. Tyrosine phosphorylated forms do not form heterooligomers with the Tyr-19-phosphorylated form existing as a monomer or dimer, and the Tyr-27-form as a monomer only. Interacts (tyrosine phosphorylated form) with the SH2 domain-containing proteins, RASA1, NCK1 and SRC. Interacts (tyrosine phosphorylated form) with INSR, the interaction (Tyr-27-phosphorylated form) is increased on insulin stimulation. Interacts (Tyr-19 phosphorylated form) with MAPK1 (phosphorylated form); the interaction, promoted by insulin, leads to nuclear location and MAPK1 activation. Interacts with STAT3; the interaction is increased on insulin-induced tyrosine phosphorylation leading to STAT activation. Phosphorylated on serine and tyrosine residues. CAV1 promotes phosphorylation on Ser-23 which then targets the complex to the plasma membrane, lipid rafts and caveolae. Phosphorylation on both Tyr-19 and Tyr-27 is required for insulin-induced 'Ser-727' phosphorylation of STAT3 and its activation. Phosphorylation on Tyr-19 is required for insulin-induced phosphorylation of MAPK1 and DNA binding of STAT3. Tyrosine phosphorylation is induced by both EGF and insulin. Expressed in aortic endothelial cells.

It localises to the nucleus. The protein resides in the cytoplasm. Its subcellular location is the golgi apparatus membrane. The protein localises to the cell membrane. It is found in the membrane. It localises to the caveola. Functionally, may act as a scaffolding protein within caveolar membranes. Interacts directly with G-protein alpha subunits and can functionally regulate their activity. Acts as an accessory protein in conjunction with CAV1 in targeting to lipid rafts and driving caveolae formation. Positive regulator of cellular mitogenesis of the MAPK signaling pathway. Required for the insulin-stimulated nuclear translocation and activation of MAPK1 and STAT3, and the subsequent regulation of cell cycle progression. The sequence is that of Caveolin-2 (CAV2) from Bos taurus (Bovine).